The following is a 245-amino-acid chain: Uridylate kinase (245 aa).

ATP is bound at residue 13-16 (KLSG). Gly-56 is a binding site for UMP. The ATP site is built by Gly-57 and Arg-61. UMP is bound by residues Asp-76 and 138 to 145 (TGRPFFTT). 3 residues coordinate ATP: Asn-166, Tyr-172, and Asp-175.

Belongs to the UMP kinase family. Homohexamer.

The protein resides in the cytoplasm. It catalyses the reaction UMP + ATP = UDP + ADP. The protein operates within pyrimidine metabolism; CTP biosynthesis via de novo pathway; UDP from UMP (UMPK route): step 1/1. Inhibited by UTP. In terms of biological role, catalyzes the reversible phosphorylation of UMP to UDP. This Mycoplasma mobile (strain ATCC 43663 / 163K / NCTC 11711) (Mesomycoplasma mobile) protein is Uridylate kinase.